A 400-amino-acid polypeptide reads, in one-letter code: Lysophospholipid transporter LplT (400 aa).

The next 12 membrane-spanning stretches (helical) occupy residues 19–39 (VIVA…ATLA), 53–73 (VLQM…GQIA), 91–111 (AGAA…LVGI), 139–159 (MMEA…GVLA), 164–184 (IAAL…NLFI), 195–213 (SWRL…VVLW), 227–247 (LFWG…PVAL), 257–277 (YLNA…AKLV), 281–301 (TVSR…IFSL), 304–324 (ALLP…FFVV), 352–372 (NSAM…GVPA), and 373–393 (VAIG…LWIW).

Belongs to the major facilitator superfamily. LplT (TC 2.A.1.42) family.

Its subcellular location is the cell inner membrane. Catalyzes the facilitated diffusion of 2-acyl-glycero-3-phosphoethanolamine (2-acyl-GPE) into the cell. This chain is Lysophospholipid transporter LplT, found in Salmonella paratyphi B (strain ATCC BAA-1250 / SPB7).